Here is a 286-residue protein sequence, read N- to C-terminus: Beta-lactamase SHV-2 (286 aa).

Residues 1 to 21 (MRYIRLCIISLLATLPLAVHA) form the signal peptide. Ser-66 serves as the catalytic Acyl-ester intermediate. Cys-73 and Cys-119 form a disulfide bridge. Glu-164 functions as the Proton acceptor in the catalytic mechanism. Residue 230–232 (KTG) participates in substrate binding.

This sequence belongs to the class-A beta-lactamase family.

The catalysed reaction is a beta-lactam + H2O = a substituted beta-amino acid. In terms of biological role, this enzyme hydrolyzes cefotaxime, ceftazidime and other broad spectrum cephalosporins. The polypeptide is Beta-lactamase SHV-2 (bla) (Klebsiella pneumoniae).